The following is a 1435-amino-acid chain: Gag-Pol polyprotein (1435 aa).

The N-myristoyl glycine; by host moiety is linked to residue G2. The interval 7–31 (VLSGGELDRWEKIRLRPGGKKKYKL) is interaction with Gp41. Residues 8 to 43 (LSGGELDRWEKIRLRPGGKKKYKLKHIVWASRELER) form an interaction with host CALM1 region. An interaction with host AP3D1 region spans residues 12-19 (ELDRWEKI). The segment at 14–33 (DRWEKIRLRPGGKKKYKLKH) is interaction with membrane phosphatidylinositol 4,5-bisphosphate and RNA. The Nuclear export signal signature appears at 16–22 (WEKIRLR). A Nuclear localization signal motif is present at residues 26 to 32 (KKKYKLK). The tract at residues 73–77 (EELRS) is interaction with membrane phosphatidylinositol 4,5-bisphosphate. Positions 106–128 (EEQNKSKKKAQQAAADTGHSNQV) are disordered. Y132 carries the phosphotyrosine; by host modification. Positions 189-227 (NTVGGHQAAMQMLKETINEEAAEWDRVHPVHAGPIAPGQ) are interaction with host PPIA/CYPA and NUP153. The tract at residues 217–225 (PVHAGPIAP) is PPIA/CYPA-binding loop. Residues 277–363 (YSPTSILDIR…GGPGHKARVL (87 aa)) are dimerization/Multimerization of capsid protein p24. CCHC-type zinc fingers lie at residues 390–407 (VKCF…NCRA) and 411–428 (KGCW…DCTE). Residues 448–481 (FSSEQTRANSPTRRELQVWGRDNNSPSEAGADRQ) form a disordered region. Positions 489 to 493 (PQVTL) are dimerization of protease. Residues 508–577 (KEALLDTGAD…TPVNIIGRNL (70 aa)) form the Peptidase A2 domain. The For protease activity; shared with dimeric partner role is filled by D513. 2 dimerization of protease regions span residues 537–543 (GIGGFIK) and 576–588 (NLLT…LNFP). One can recognise a Reverse transcriptase domain in the interval 631 to 821 (EGKISKIGPE…PPFLWMGYEL (191 aa)). Mg(2+) contacts are provided by D697, D772, and D773. Residues 814-822 (FLWMGYELH) are RT 'primer grip'. The Tryptophan repeat motif motif lies at 985–1001 (WETWWTEYWQATWIPEW). The region spanning 1021–1144 (IVGAETFYVD…VDKLVSAGIR (124 aa)) is the RNase H type-1 domain. Residues D1030, E1065, D1085, and D1136 each contribute to the Mg(2+) site. An Integrase-type zinc finger spans residues 1150–1191 (DGIDKAQDEHEKYHSNWRAMASDFNLPPVVAKEIVASCDKCQ). Zn(2+) is bound by residues H1159, H1163, C1187, and C1190. Residues 1201 to 1351 (VDCSPGIWQL…SAGERIVDII (151 aa)) enclose the Integrase catalytic domain. Residues D1211, D1263, and E1299 each contribute to the Mg(2+) site. The integrase-type DNA-binding region spans 1370–1417 (FRVYYRDSRNPLWKGPAKLLWKGEGAVVIQDNSDIKVVPRRKAKIIRD).

In terms of assembly, homotrimer; further assembles as hexamers of trimers. Interacts with gp41 (via C-terminus). Interacts with host CALM1; this interaction induces a conformational change in the Matrix protein, triggering exposure of the myristate group. Interacts with host AP3D1; this interaction allows the polyprotein trafficking to multivesicular bodies during virus assembly. Part of the pre-integration complex (PIC) which is composed of viral genome, matrix protein, Vpr and integrase. Homodimer; the homodimer further multimerizes as homohexamers or homopentamers. Interacts with human PPIA/CYPA; this interaction stabilizes the capsid. Interacts with human NUP153. Interacts with host PDZD8; this interaction stabilizes the capsid. Interacts with monkey TRIM5; this interaction destabilizes the capsid. As to quaternary structure, homodimer, whose active site consists of two apposed aspartic acid residues. In terms of assembly, heterodimer of p66 RT and p51 RT (RT p66/p51). Heterodimerization of RT is essential for DNA polymerase activity. The overall folding of the subdomains is similar in p66 RT and p51 RT but the spatial arrangements of the subdomains are dramatically different. Homotetramer; may further associate as a homohexadecamer. Part of the pre-integration complex (PIC) which is composed of viral genome, matrix protein, Vpr and integrase. Interacts with human SMARCB1/INI1 and human PSIP1/LEDGF isoform 1. Interacts with human KPNA3; this interaction might play a role in nuclear import of the pre-. integration complex. Interacts with human NUP153; this interaction might play a role in nuclear import of the pre-integration complex. The cofactor is Mg(2+). Specific enzymatic cleavages by the viral protease yield mature proteins. The protease is released by autocatalytic cleavage. The polyprotein is cleaved during and after budding, this process is termed maturation. Proteolytic cleavage of p66 RT removes the RNase H domain to yield the p51 RT subunit. Nucleocapsid protein p7 might be further cleaved after virus entry. Post-translationally, tyrosine phosphorylated presumably in the virion by a host kinase. Phosphorylation is apparently not a major regulator of membrane association. In terms of processing, phosphorylated possibly by host MAPK1; this phosphorylation is necessary for Pin1-mediated virion uncoating. Methylated by host PRMT6, impairing its function by reducing RNA annealing and the initiation of reverse transcription.

Its subcellular location is the host cell membrane. It localises to the host endosome. The protein localises to the host multivesicular body. It is found in the virion membrane. The protein resides in the host nucleus. Its subcellular location is the host cytoplasm. It localises to the virion. The catalysed reaction is Specific for a P1 residue that is hydrophobic, and P1' variable, but often Pro.. The enzyme catalyses Endohydrolysis of RNA in RNA/DNA hybrids. Three different cleavage modes: 1. sequence-specific internal cleavage of RNA. Human immunodeficiency virus type 1 and Moloney murine leukemia virus enzymes prefer to cleave the RNA strand one nucleotide away from the RNA-DNA junction. 2. RNA 5'-end directed cleavage 13-19 nucleotides from the RNA end. 3. DNA 3'-end directed cleavage 15-20 nucleotides away from the primer terminus.. It carries out the reaction 3'-end directed exonucleolytic cleavage of viral RNA-DNA hybrid.. It catalyses the reaction DNA(n) + a 2'-deoxyribonucleoside 5'-triphosphate = DNA(n+1) + diphosphate. Protease: The viral protease is inhibited by many synthetic protease inhibitors (PIs), such as amprenavir, atazanavir, indinavir, loprinavir, nelfinavir, ritonavir and saquinavir. Use of protease inhibitors in tritherapy regimens permit more ambitious therapeutic strategies. Reverse transcriptase/ribonuclease H: RT can be inhibited either by nucleoside RT inhibitors (NRTIs) or by non nucleoside RT inhibitors (NNRTIs). NRTIs act as chain terminators, whereas NNRTIs inhibit DNA polymerization by binding a small hydrophobic pocket near the RT active site and inducing an allosteric change in this region. Classical NRTIs are abacavir, adefovir (PMEA), didanosine (ddI), lamivudine (3TC), stavudine (d4T), tenofovir (PMPA), zalcitabine (ddC), and zidovudine (AZT). Classical NNRTIs are atevirdine (BHAP U-87201E), delavirdine, efavirenz (DMP-266), emivirine (I-EBU), and nevirapine (BI-RG-587). The tritherapies used as a basic effective treatment of AIDS associate two NRTIs and one NNRTI. Its function is as follows. Mediates, with Gag polyprotein, the essential events in virion assembly, including binding the plasma membrane, making the protein-protein interactions necessary to create spherical particles, recruiting the viral Env proteins, and packaging the genomic RNA via direct interactions with the RNA packaging sequence (Psi). Gag-Pol polyprotein may regulate its own translation, by the binding genomic RNA in the 5'-UTR. At low concentration, the polyprotein would promote translation, whereas at high concentration, the polyprotein would encapsidate genomic RNA and then shut off translation. Targets the polyprotein to the plasma membrane via a multipartite membrane-binding signal, that includes its myristoylated N-terminus. Matrix protein is part of the pre-integration complex. Implicated in the release from host cell mediated by Vpu. Binds to RNA. In terms of biological role, forms the conical core that encapsulates the genomic RNA-nucleocapsid complex in the virion. Most core are conical, with only 7% tubular. The core is constituted by capsid protein hexamer subunits. The core is disassembled soon after virion entry. Host restriction factors such as monkey TRIM5-alpha or TRIMCyp bind retroviral capsids and cause premature capsid disassembly, leading to blocks in reverse transcription. Capsid restriction by TRIM5 is one of the factors which restricts HIV-1 to the human species. Host PIN1 apparently facilitates the virion uncoating. On the other hand, interactions with PDZD8 or CYPA stabilize the capsid. Functionally, encapsulates and protects viral dimeric unspliced genomic RNA (gRNA). Binds these RNAs through its zinc fingers. Acts as a nucleic acid chaperone which is involved in rearangement of nucleic acid secondary structure during gRNA retrotranscription. Also facilitates template switch leading to recombination. As part of the polyprotein, participates in gRNA dimerization, packaging, tRNA incorporation and virion assembly. Its function is as follows. Aspartyl protease that mediates proteolytic cleavages of Gag and Gag-Pol polyproteins during or shortly after the release of the virion from the plasma membrane. Cleavages take place as an ordered, step-wise cascade to yield mature proteins. This process is called maturation. Displays maximal activity during the budding process just prior to particle release from the cell. Also cleaves Nef and Vif, probably concomitantly with viral structural proteins on maturation of virus particles. Hydrolyzes host EIF4GI and PABP1 in order to shut off the capped cellular mRNA translation. The resulting inhibition of cellular protein synthesis serves to ensure maximal viral gene expression and to evade host immune response. Also mediates cleavage of host YTHDF3. Mediates cleavage of host CARD8, thereby activating the CARD8 inflammasome, leading to the clearance of latent HIV-1 in patient CD4(+) T-cells after viral reactivation; in contrast, HIV-1 can evade CARD8-sensing when its protease remains inactive in infected cells prior to viral budding. Multifunctional enzyme that converts the viral RNA genome into dsDNA in the cytoplasm, shortly after virus entry into the cell. This enzyme displays a DNA polymerase activity that can copy either DNA or RNA templates, and a ribonuclease H (RNase H) activity that cleaves the RNA strand of RNA-DNA heteroduplexes in a partially processive 3' to 5' endonucleasic mode. Conversion of viral genomic RNA into dsDNA requires many steps. A tRNA(3)-Lys binds to the primer-binding site (PBS) situated at the 5'-end of the viral RNA. RT uses the 3' end of the tRNA primer to perform a short round of RNA-dependent minus-strand DNA synthesis. The reading proceeds through the U5 region and ends after the repeated (R) region which is present at both ends of viral RNA. The portion of the RNA-DNA heteroduplex is digested by the RNase H, resulting in a ssDNA product attached to the tRNA primer. This ssDNA/tRNA hybridizes with the identical R region situated at the 3' end of viral RNA. This template exchange, known as minus-strand DNA strong stop transfer, can be either intra- or intermolecular. RT uses the 3' end of this newly synthesized short ssDNA to perform the RNA-dependent minus-strand DNA synthesis of the whole template. RNase H digests the RNA template except for two polypurine tracts (PPTs) situated at the 5'-end and near the center of the genome. It is not clear if both polymerase and RNase H activities are simultaneous. RNase H probably can proceed both in a polymerase-dependent (RNA cut into small fragments by the same RT performing DNA synthesis) and a polymerase-independent mode (cleavage of remaining RNA fragments by free RTs). Secondly, RT performs DNA-directed plus-strand DNA synthesis using the PPTs that have not been removed by RNase H as primers. PPTs and tRNA primers are then removed by RNase H. The 3' and 5' ssDNA PBS regions hybridize to form a circular dsDNA intermediate. Strand displacement synthesis by RT to the PBS and PPT ends produces a blunt ended, linear dsDNA copy of the viral genome that includes long terminal repeats (LTRs) at both ends. In terms of biological role, catalyzes viral DNA integration into the host chromosome, by performing a series of DNA cutting and joining reactions. This enzyme activity takes place after virion entry into a cell and reverse transcription of the RNA genome in dsDNA. The first step in the integration process is 3' processing. This step requires a complex comprising the viral genome, matrix protein, Vpr and integrase. This complex is called the pre-integration complex (PIC). The integrase protein removes 2 nucleotides from each 3' end of the viral DNA, leaving recessed CA OH's at the 3' ends. In the second step, the PIC enters cell nucleus. This process is mediated through integrase and Vpr proteins, and allows the virus to infect a non dividing cell. This ability to enter the nucleus is specific of lentiviruses, other retroviruses cannot and rely on cell division to access cell chromosomes. In the third step, termed strand transfer, the integrase protein joins the previously processed 3' ends to the 5' ends of strands of target cellular DNA at the site of integration. The 5'-ends are produced by integrase-catalyzed staggered cuts, 5 bp apart. A Y-shaped, gapped, recombination intermediate results, with the 5'-ends of the viral DNA strands and the 3' ends of target DNA strands remaining unjoined, flanking a gap of 5 bp. The last step is viral DNA integration into host chromosome. This involves host DNA repair synthesis in which the 5 bp gaps between the unjoined strands are filled in and then ligated. Since this process occurs at both cuts flanking the HIV genome, a 5 bp duplication of host DNA is produced at the ends of HIV-1 integration. Alternatively, Integrase may catalyze the excision of viral DNA just after strand transfer, this is termed disintegration. The protein is Gag-Pol polyprotein (gag-pol) of Human immunodeficiency virus type 1 group M subtype B (isolate HXB2) (HIV-1).